The sequence spans 380 residues: L-lactate dehydrogenase (380 aa).

One can recognise an FMN hydroxy acid dehydrogenase domain in the interval 1–380 (MIISSPNDYR…TRDSLVGLPR (380 aa)). Residue Y24 coordinates substrate. FMN-binding residues include S106 and Q127. Y129 is a substrate binding site. An FMN-binding site is contributed by T155. R164 contributes to the substrate binding site. K251 lines the FMN pocket. H275 acts as the Proton acceptor in catalysis. Residue R278 coordinates substrate. Residue 306–330 (DSGIRTGLDVVRMLALGAKGVLLGR) participates in FMN binding.

The protein belongs to the FMN-dependent alpha-hydroxy acid dehydrogenase family. FMN is required as a cofactor.

It is found in the cell inner membrane. It carries out the reaction (S)-lactate + A = pyruvate + AH2. Catalyzes the conversion of L-lactate to pyruvate. Is coupled to the respiratory chain. The sequence is that of L-lactate dehydrogenase from Azorhizobium caulinodans (strain ATCC 43989 / DSM 5975 / JCM 20966 / LMG 6465 / NBRC 14845 / NCIMB 13405 / ORS 571).